The primary structure comprises 119 residues: Large ribosomal subunit protein uL18 (119 aa).

The tract at residues 1–23 (MISKPDKNKTRQRRHARVRGKIS) is disordered. Positions 10-20 (TRQRRHARVRG) are enriched in basic residues.

It belongs to the universal ribosomal protein uL18 family. Part of the 50S ribosomal subunit; part of the 5S rRNA/L5/L18/L25 subcomplex. Contacts the 5S and 23S rRNAs.

This is one of the proteins that bind and probably mediate the attachment of the 5S RNA into the large ribosomal subunit, where it forms part of the central protuberance. The protein is Large ribosomal subunit protein uL18 of Lacticaseibacillus casei (strain BL23) (Lactobacillus casei).